Consider the following 301-residue polypeptide: Porphobilinogen deaminase (301 aa).

Cysteine 235 bears the S-(dipyrrolylmethanemethyl)cysteine mark.

This sequence belongs to the HMBS family. In terms of assembly, monomer. Dipyrromethane is required as a cofactor.

It catalyses the reaction 4 porphobilinogen + H2O = hydroxymethylbilane + 4 NH4(+). It functions in the pathway porphyrin-containing compound metabolism; protoporphyrin-IX biosynthesis; coproporphyrinogen-III from 5-aminolevulinate: step 2/4. In terms of biological role, tetrapolymerization of the monopyrrole PBG into the hydroxymethylbilane pre-uroporphyrinogen in several discrete steps. The protein is Porphobilinogen deaminase of Thermus thermophilus (strain ATCC BAA-163 / DSM 7039 / HB27).